The chain runs to 705 residues: Polyribonucleotide nucleotidyltransferase (705 aa).

Mg(2+) contacts are provided by Asp-487 and Asp-493. In terms of domain architecture, KH spans 554–613; that stretch reads PKILTMAIEPDKIRDVIGPSGKQINQIIDETGVKIDIEQDGSIFISSTDNEMNKKAKQII. The S1 motif domain maps to 623-691; that stretch reads GQIYLGKVKR…RQGRVNLSRK (69 aa).

It belongs to the polyribonucleotide nucleotidyltransferase family. The cofactor is Mg(2+).

It localises to the cytoplasm. The enzyme catalyses RNA(n+1) + phosphate = RNA(n) + a ribonucleoside 5'-diphosphate. Involved in mRNA degradation. Catalyzes the phosphorolysis of single-stranded polyribonucleotides processively in the 3'- to 5'-direction. The polypeptide is Polyribonucleotide nucleotidyltransferase (Oceanobacillus iheyensis (strain DSM 14371 / CIP 107618 / JCM 11309 / KCTC 3954 / HTE831)).